The sequence spans 449 residues: Biotin carboxylase (449 aa).

One can recognise a Biotin carboxylation domain in the interval methionine 1–glycine 445. ATP is bound by residues lysine 116, lysine 159, glycine 165 to glycine 166, glutamate 201 to leucine 204, histidine 209, and histidine 236. Positions lysine 120–serine 317 constitute an ATP-grasp domain. Position 238 (lysine 238) interacts with hydrogencarbonate. The ATP site is built by glutamate 276 and glutamate 288. Mg(2+)-binding residues include glutamate 276, glutamate 288, and asparagine 290. Mn(2+) is bound by residues glutamate 276, glutamate 288, and asparagine 290. The hydrogencarbonate site is built by arginine 292, valine 295, and arginine 338. Arginine 292 is a catalytic residue. Position 338 (arginine 338) interacts with biotin.

Acetyl-CoA carboxylase is a heterohexamer of biotin carboxyl carrier protein, biotin carboxylase and the two subunits of carboxyl transferase in a 2:2 complex. Requires Mg(2+) as cofactor. Mn(2+) serves as cofactor.

It catalyses the reaction N(6)-biotinyl-L-lysyl-[protein] + hydrogencarbonate + ATP = N(6)-carboxybiotinyl-L-lysyl-[protein] + ADP + phosphate + H(+). It functions in the pathway lipid metabolism; malonyl-CoA biosynthesis; malonyl-CoA from acetyl-CoA: step 1/1. Its function is as follows. This protein is a component of the acetyl coenzyme A carboxylase complex; first, biotin carboxylase catalyzes the carboxylation of the carrier protein and then the transcarboxylase transfers the carboxyl group to form malonyl-CoA. This is Biotin carboxylase (accC) from Pseudomonas aeruginosa (strain ATCC 15692 / DSM 22644 / CIP 104116 / JCM 14847 / LMG 12228 / 1C / PRS 101 / PAO1).